Reading from the N-terminus, the 98-residue chain is Flagellar hook-basal body complex protein FliE (98 aa).

Belongs to the FliE family.

Its subcellular location is the bacterial flagellum basal body. The sequence is that of Flagellar hook-basal body complex protein FliE from Listeria monocytogenes serovar 1/2a (strain ATCC BAA-679 / EGD-e).